The sequence spans 279 residues: Alcohol dehydrogenase-related 31 kDa protein (279 aa).

Residue 11 to 34 (YVADCGGIALETSKVLMTKNIAKL) participates in NAD(+) binding. Substrate is bound at residue serine 139. The Proton acceptor role is filled by tyrosine 152.

Belongs to the short-chain dehydrogenases/reductases (SDR) family.

The protein is Alcohol dehydrogenase-related 31 kDa protein (Adhr) of Drosophila subobscura (Fruit fly).